Here is a 117-residue protein sequence, read N- to C-terminus: Large ribosomal subunit protein bL20 (117 aa).

It belongs to the bacterial ribosomal protein bL20 family.

Functionally, binds directly to 23S ribosomal RNA and is necessary for the in vitro assembly process of the 50S ribosomal subunit. It is not involved in the protein synthesizing functions of that subunit. This Rickettsia felis (strain ATCC VR-1525 / URRWXCal2) (Rickettsia azadi) protein is Large ribosomal subunit protein bL20.